The following is a 169-amino-acid chain: Der GTPase-activating protein YihI (169 aa).

2 disordered regions span residues M1–G75 and G144–N169. Residues S10–K19 show a composition bias toward basic residues. Positions T20–D30 are enriched in basic and acidic residues. Residues R31 to H40 are compositionally biased toward basic residues. Over residues G49–Q58 the composition is skewed to polar residues. Residues Y147 to Q159 show a composition bias toward acidic residues. Basic and acidic residues predominate over residues E160–N169.

This sequence belongs to the YihI family. In terms of assembly, interacts with Der.

Its function is as follows. A GTPase-activating protein (GAP) that modifies Der/EngA GTPase function. May play a role in ribosome biogenesis. This is Der GTPase-activating protein YihI from Escherichia coli (strain 55989 / EAEC).